The primary structure comprises 986 residues: Probable ATP-dependent RNA helicase ddx42 (986 aa).

Disordered regions lie at residues 1–149, 165–192, and 206–252; these read MSKR…DEDD, AAIDNSKSIEKGQQQQQSLKSKRDDIDN, and QLAN…IEPL. Over residues 29 to 82 the composition is skewed to low complexity; that stretch reads SNINNNNNSNNNNNNNNNNNNNNNNNNNKNNIGTGINLNIKNNNNINNNNNKSG. Residues 105–117 are compositionally biased toward polar residues; that stretch reads PPKSSMTTLNKSP. Over residues 119–137 the composition is skewed to low complexity; it reads NFENASSNNNNNNNNNNQE. The span at 217-236 shows a compositional bias: acidic residues; that stretch reads DDDVDYSSLDDDDGYFDDEE. The Q motif motif lies at 305–333; sequence TSFGHYGFDDILLQAIAKQSIETPTPIQK. Positions 336 to 511 constitute a Helicase ATP-binding domain; it reads IPIALSGRDL…RTILSDPIKI (176 aa). 349 to 356 is an ATP binding site; it reads AKTGSGKT. Residues 459–462 carry the DEAD box motif; that stretch reads DEAD. Positions 522–684 constitute a Helicase C-terminal domain; sequence DITQIVQVLK…FVPPELIDVA (163 aa). Residues 688 to 986 are disordered; the sequence is PHFKRERGGG…FNQRSQYNRR (299 aa). Residues 696 to 723 are compositionally biased toward gly residues; that stretch reads GGGGGSNRGRGRGGGGVGYRRNSRGGGV. Low complexity-rich tracts occupy residues 753–764 and 771–978; these read NPNNTDNSEINN and NNEN…NNFN.

This sequence belongs to the DEAD box helicase family. DDX42 subfamily.

It is found in the nucleus. The catalysed reaction is ATP + H2O = ADP + phosphate + H(+). Probable ATP-dependent RNA helicase which may bind to partially double-stranded RNAs (dsRNAs) in order to unwind RNA secondary structures. The chain is Probable ATP-dependent RNA helicase ddx42 (ddx42) from Dictyostelium discoideum (Social amoeba).